We begin with the raw amino-acid sequence, 247 residues long: Uridylate kinase (247 aa).

Position 18–21 (18–21) interacts with ATP; it reads KLSG. Glycine 60 provides a ligand contact to UMP. ATP contacts are provided by glycine 61 and arginine 65. Residues aspartate 80 and 141 to 148 each bind UMP; that span reads TGNPFFTT. Positions 168, 174, and 177 each coordinate ATP.

It belongs to the UMP kinase family. In terms of assembly, homohexamer.

The protein resides in the cytoplasm. It catalyses the reaction UMP + ATP = UDP + ADP. It participates in pyrimidine metabolism; CTP biosynthesis via de novo pathway; UDP from UMP (UMPK route): step 1/1. With respect to regulation, inhibited by UTP. Functionally, catalyzes the reversible phosphorylation of UMP to UDP. In Pseudomonas savastanoi pv. phaseolicola (strain 1448A / Race 6) (Pseudomonas syringae pv. phaseolicola (strain 1448A / Race 6)), this protein is Uridylate kinase.